The primary structure comprises 151 residues: Small ribosomal subunit protein uS15 (151 aa).

The tract at residues 1 to 20 (MARLHSGKRGSSGSTRPLRT) is disordered.

It belongs to the universal ribosomal protein uS15 family. In terms of assembly, part of the 30S ribosomal subunit.

The sequence is that of Small ribosomal subunit protein uS15 from Methanococcus maripaludis (strain C5 / ATCC BAA-1333).